The primary structure comprises 520 residues: mRNA-capping enzyme subunit beta (520 aa).

The interval 1-185 is disordered; that stretch reads MNVGSILNDD…PQPVFDDQDD (185 aa). Polar residues-rich tracts occupy residues 11–21 and 44–56; these read PPSSGNANGND and ITSM…SDST. Residues 92-108 show a composition bias toward low complexity; sequence SSSSVGSSEHSSARSSP. 2 stretches are compositionally biased toward basic and acidic residues: residues 126-135 and 149-176; these read PATKTEKKAE and KLEE…KKEP.

Belongs to the fungal TPase family. In terms of assembly, heterodimer. The mRNA-capping enzyme is composed of two separate chains alpha and beta, respectively a mRNA guanylyltransferase and an mRNA 5'-triphosphate monophosphatase. Mg(2+) serves as cofactor.

Its subcellular location is the nucleus. The enzyme catalyses a 5'-end triphospho-ribonucleoside in mRNA + H2O = a 5'-end diphospho-ribonucleoside in mRNA + phosphate + H(+). In terms of biological role, first step of mRNA capping. Converts the 5'-triphosphate end of a nascent mRNA chain into a diphosphate end. The polypeptide is mRNA-capping enzyme subunit beta (CET1) (Candida albicans (strain SC5314 / ATCC MYA-2876) (Yeast)).